The primary structure comprises 486 residues: Endoglucanase 16 (486 aa).

A signal peptide spans 1–30 (MANYKGRGNVMIRSMLLGLYGIINIVCVNG). Asn29 is a glycosylation site (N-linked (GlcNAc...) asparagine). Asp87 functions as the Nucleophile in the catalytic mechanism. Catalysis depends on residues His407, Asp458, and Glu467.

The protein belongs to the glycosyl hydrolase 9 (cellulase E) family.

The protein localises to the secreted. The catalysed reaction is Endohydrolysis of (1-&gt;4)-beta-D-glucosidic linkages in cellulose, lichenin and cereal beta-D-glucans.. The protein is Endoglucanase 16 of Arabidopsis thaliana (Mouse-ear cress).